Consider the following 531-residue polypeptide: 2,3-bisphosphoglycerate-independent phosphoglycerate mutase (531 aa).

Mn(2+) is bound by residues D13 and S63. S63 functions as the Phosphoserine intermediate in the catalytic mechanism. Substrate-binding positions include H124, 154–155 (RD), R187, R193, 261–264 (RPDR), and K342. Mn(2+)-binding residues include D420, H424, D462, H463, and H480.

It belongs to the BPG-independent phosphoglycerate mutase family. In terms of assembly, monomer. Mn(2+) serves as cofactor.

It carries out the reaction (2R)-2-phosphoglycerate = (2R)-3-phosphoglycerate. The protein operates within carbohydrate degradation; glycolysis; pyruvate from D-glyceraldehyde 3-phosphate: step 3/5. Its function is as follows. Catalyzes the interconversion of 2-phosphoglycerate and 3-phosphoglycerate. The sequence is that of 2,3-bisphosphoglycerate-independent phosphoglycerate mutase from Mycoplasma capricolum subsp. capricolum (strain California kid / ATCC 27343 / NCTC 10154).